Here is a 447-residue protein sequence, read N- to C-terminus: NADP-specific glutamate dehydrogenase (447 aa).

3 residues coordinate substrate: lysine 92, glutamine 113, and lysine 116. Lysine 128 functions as the Proton donor in the catalytic mechanism. Glycine 167 serves as a coordination point for substrate. 2 residues coordinate NADP(+): threonine 212 and asparagine 243. Serine 379 lines the substrate pocket.

It belongs to the Glu/Leu/Phe/Val dehydrogenases family. In terms of assembly, homohexamer.

It carries out the reaction L-glutamate + NADP(+) + H2O = 2-oxoglutarate + NH4(+) + NADPH + H(+). In terms of biological role, catalyzes the reversible oxidative deamination of glutamate to alpha-ketoglutarate and ammonia. The sequence is that of NADP-specific glutamate dehydrogenase (gdh) from Corynebacterium glutamicum (strain ATCC 13032 / DSM 20300 / JCM 1318 / BCRC 11384 / CCUG 27702 / LMG 3730 / NBRC 12168 / NCIMB 10025 / NRRL B-2784 / 534).